A 119-amino-acid chain; its full sequence is Large ribosomal subunit protein bL20 (119 aa).

It belongs to the bacterial ribosomal protein bL20 family.

Binds directly to 23S ribosomal RNA and is necessary for the in vitro assembly process of the 50S ribosomal subunit. It is not involved in the protein synthesizing functions of that subunit. This chain is Large ribosomal subunit protein bL20, found in Thermoanaerobacter pseudethanolicus (strain ATCC 33223 / 39E) (Clostridium thermohydrosulfuricum).